The primary structure comprises 401 residues: Carboxybiotin decarboxylase (401 aa).

Transmembrane regions (helical) follow at residues 20–40, 46–66, 70–90, 107–127, 131–151, 173–193, 244–264, 275–295, 306–326, and 380–400; these read VISI…YFGF, PLIM…VLFL, VVGT…VNLM, LIAC…FILI, ASII…IIGI, MVLF…AIIA, LCLL…GIAI, LLET…LGAL, ISLI…GGVL, and VCGL…LFLL.

The protein resides in the cell membrane. The enzyme catalyses N(6)-carboxybiotinyl-L-lysyl-[protein] + n Na(+)(in) + H(+) = N(6)-biotinyl-L-lysyl-[protein] + n Na(+)(out) + CO2. In terms of biological role, beta subunit of the biotin-dependent malonate decarboxylase multienzyme complex (EC 7.2.4.4). Acts as an integral membrane-bound carboxybiotin protein decarboxylase by releasing the carboxyl group of the carboxylated biotin carrier MADF. The free energy of the decarboxylation reaction is used to pump Na(+) out of the cell. In Malonomonas rubra, this protein is Carboxybiotin decarboxylase (madB).